Consider the following 834-residue polypeptide: ABC transporter A family member 11 (834 aa).

Transmembrane regions (helical) follow at residues phenylalanine 35–asparagine 55, methionine 188–valine 208, valine 235–phenylalanine 255, phenylalanine 269–isoleucine 289, asparagine 297–phenylalanine 319, proline 324–leucine 346, and serine 355–isoleucine 375. Residues leucine 452–isoleucine 693 enclose the ABC transporter domain. An ATP-binding site is contributed by glycine 495–serine 502. Over residues lysine 779 to isoleucine 789 the composition is skewed to polar residues. Positions lysine 779–asparagine 834 are disordered. The span at asparagine 790 to asparagine 834 shows a compositional bias: low complexity.

This sequence belongs to the ABC transporter superfamily. ABCA family.

It is found in the membrane. This chain is ABC transporter A family member 11 (abcA11), found in Dictyostelium discoideum (Social amoeba).